Consider the following 285-residue polypeptide: Probable endonuclease 4 (285 aa).

Zn(2+)-binding residues include H69, H109, E145, D179, H182, H216, D229, H231, and E261.

This sequence belongs to the AP endonuclease 2 family. The cofactor is Zn(2+).

The enzyme catalyses Endonucleolytic cleavage to 5'-phosphooligonucleotide end-products.. Functionally, endonuclease IV plays a role in DNA repair. It cleaves phosphodiester bonds at apurinic or apyrimidinic (AP) sites, generating a 3'-hydroxyl group and a 5'-terminal sugar phosphate. This chain is Probable endonuclease 4, found in Salmonella arizonae (strain ATCC BAA-731 / CDC346-86 / RSK2980).